A 227-amino-acid polypeptide reads, in one-letter code: ATP-dependent dethiobiotin synthetase BioD (227 aa).

13 to 18 provides a ligand contact to ATP; it reads DIGKTY. Position 17 (Thr-17) interacts with Mg(2+). Lys-38 is an active-site residue. Ser-42 lines the substrate pocket. Residues Asp-55, 116–119, and 179–180 each bind ATP; these read EGSG and NN. Asp-55 and Glu-116 together coordinate Mg(2+).

Belongs to the dethiobiotin synthetase family. As to quaternary structure, homodimer. The cofactor is Mg(2+).

The protein resides in the cytoplasm. It carries out the reaction (7R,8S)-7,8-diammoniononanoate + CO2 + ATP = (4R,5S)-dethiobiotin + ADP + phosphate + 3 H(+). It functions in the pathway cofactor biosynthesis; biotin biosynthesis; biotin from 7,8-diaminononanoate: step 1/2. Functionally, catalyzes a mechanistically unusual reaction, the ATP-dependent insertion of CO2 between the N7 and N8 nitrogen atoms of 7,8-diaminopelargonic acid (DAPA, also called 7,8-diammoniononanoate) to form a ureido ring. This Clostridium botulinum (strain Okra / Type B1) protein is ATP-dependent dethiobiotin synthetase BioD.